A 444-amino-acid polypeptide reads, in one-letter code: Tol-Pal system protein TolB (444 aa).

Positions 1–19 are cleaved as a signal peptide; sequence MRNIIYFILSLLFSVTSYA.

This sequence belongs to the TolB family. In terms of assembly, the Tol-Pal system is composed of five core proteins: the inner membrane proteins TolA, TolQ and TolR, the periplasmic protein TolB and the outer membrane protein Pal. They form a network linking the inner and outer membranes and the peptidoglycan layer.

It localises to the periplasm. Functionally, part of the Tol-Pal system, which plays a role in outer membrane invagination during cell division and is important for maintaining outer membrane integrity. The chain is Tol-Pal system protein TolB from Rickettsia peacockii (strain Rustic).